The sequence spans 231 residues: PX domain-containing protein 1 (231 aa).

The region spanning 1–134 is the PX domain; that stretch reads MASAVFEGTS…TFFERSPLDQ (134 aa).

This chain is PX domain-containing protein 1 (PXDC1), found in Homo sapiens (Human).